The chain runs to 315 residues: 2,3-dihydroxyphenylpropionate/2,3-dihydroxicinnamic acid 1,2-dioxygenase (315 aa).

His-118 functions as the Proton donor in the catalytic mechanism. The Proton acceptor role is filled by His-182.

It belongs to the LigB/MhpB extradiol dioxygenase family. As to quaternary structure, homotetramer. It depends on Fe(2+) as a cofactor.

The catalysed reaction is 3-(2,3-dihydroxyphenyl)propanoate + O2 = (2Z,4E)-2-hydroxy-6-oxonona-2,4-dienedioate + H(+). It carries out the reaction (2E)-3-(2,3-dihydroxyphenyl)prop-2-enoate + O2 = (2Z,4E,7E)-2-hydroxy-6-oxonona-2,4,7-trienedioate + H(+). It participates in aromatic compound metabolism; 3-phenylpropanoate degradation. Functionally, catalyzes the non-heme iron(II)-dependent oxidative cleavage of 2,3-dihydroxyphenylpropionic acid and 2,3-dihydroxicinnamic acid into 2-hydroxy-6-ketononadienedioate and 2-hydroxy-6-ketononatrienedioate, respectively. The chain is 2,3-dihydroxyphenylpropionate/2,3-dihydroxicinnamic acid 1,2-dioxygenase from Mycolicibacterium gilvum (strain PYR-GCK) (Mycobacterium gilvum (strain PYR-GCK)).